Consider the following 318-residue polypeptide: L-malyl-CoA/beta-methylmalyl-CoA lyase (318 aa).

The substrate site is built by F19, R24, K30, and R76. Mg(2+) is bound by residues E141 and D168. Residues 167–168 and 251–252 each bind substrate; these read AD and IH.

The protein belongs to the HpcH/HpaI aldolase family. Homohexamer. Dimer of trimers. It depends on Mg(2+) as a cofactor. Requires Mn(2+) as cofactor.

The enzyme catalyses (S)-malyl-CoA = glyoxylate + acetyl-CoA. The catalysed reaction is (2R,3S)-beta-methylmalyl-CoA = propanoyl-CoA + glyoxylate. In vitro inhibited by EDTA. Functionally, involved in the ethylmalonyl-CoA pathway for acetate assimilation. Catalyzes the reversible condensation of glyoxylate and acetyl-CoA to L-malyl-CoA and the reversible condensation of glyoxylate and propionyl-CoA to beta-methylmalyl-CoA. The polypeptide is L-malyl-CoA/beta-methylmalyl-CoA lyase (Rhodobacter capsulatus (Rhodopseudomonas capsulata)).